Reading from the N-terminus, the 154-residue chain is MATFSQKPTEVVKKWVIIDAENLVLGRLAAFVANRLRGKHKATFTPHVDDGDNVIVINADKIALTGKKYTDKKYYWHTGYIGGIKERTARQLLEGRFPERVVEKAVERMIPRGPLGRRQLKNLRVYAGSQHPHEAQQPESLDVGALNRKNKRIA.

It belongs to the universal ribosomal protein uL13 family. Part of the 50S ribosomal subunit.

Its function is as follows. This protein is one of the early assembly proteins of the 50S ribosomal subunit, although it is not seen to bind rRNA by itself. It is important during the early stages of 50S assembly. The chain is Large ribosomal subunit protein uL13 from Bartonella tribocorum (strain CIP 105476 / IBS 506).